The sequence spans 103 residues: N(4)-acetylcytidine amidohydrolase (103 aa).

The region spanning 6 to 101 (ITFSQRFQDD…QTQFYVIEFK (96 aa)) is the ASCH domain. Lys21 functions as the Proton acceptor in the catalytic mechanism. Catalysis depends on Thr24, which acts as the Nucleophile. Glu74 serves as the catalytic Proton donor.

This sequence belongs to the N(4)-acetylcytidine amidohydrolase family.

The enzyme catalyses N(4)-acetylcytidine + H2O = cytidine + acetate + H(+). The catalysed reaction is N(4)-acetyl-2'-deoxycytidine + H2O = 2'-deoxycytidine + acetate + H(+). It catalyses the reaction N(4)-acetylcytosine + H2O = cytosine + acetate + H(+). Functionally, catalyzes the hydrolysis of N(4)-acetylcytidine (ac4C). This Shigella boydii serotype 4 (strain Sb227) protein is N(4)-acetylcytidine amidohydrolase (yqfB).